Here is a 1597-residue protein sequence, read N- to C-terminus: Pentafunctional AROM polypeptide (1597 aa).

The interval 1 to 384 (MGVPTKISIL…HEPRASTVSN (384 aa)) is 3-dehydroquinate synthase. NAD(+) contacts are provided by residues 44-46 (DTN), 81-84 (ESSK), 114-116 (GGV), and aspartate 119. Residue arginine 130 coordinates 7-phospho-2-dehydro-3-deoxy-D-arabino-heptonate. Position 139 to 140 (139 to 140 (TT)) interacts with NAD(+). 7-phospho-2-dehydro-3-deoxy-D-arabino-heptonate is bound by residues aspartate 146 and lysine 152. NAD(+) is bound at residue lysine 161. Asparagine 162 lines the 7-phospho-2-dehydro-3-deoxy-D-arabino-heptonate pocket. Residues 179–182 (FLNT) and asparagine 190 contribute to the NAD(+) site. Glutamate 194 lines the Zn(2+) pocket. Residues 194-197 (EVIK) and lysine 250 contribute to the 7-phospho-2-dehydro-3-deoxy-D-arabino-heptonate site. Glutamate 260 acts as the Proton acceptor; for 3-dehydroquinate synthase activity in catalysis. Residues 264 to 268 (RNLLN) and histidine 271 contribute to the 7-phospho-2-dehydro-3-deoxy-D-arabino-heptonate site. Histidine 271 contributes to the Zn(2+) binding site. Histidine 275 acts as the Proton acceptor; for 3-dehydroquinate synthase activity in catalysis. Residues histidine 287 and lysine 356 each coordinate 7-phospho-2-dehydro-3-deoxy-D-arabino-heptonate. Zn(2+) is bound at residue histidine 287. The EPSP synthase stretch occupies residues 397-842 (VSPGVPKNLN…WDSLAQTFKV (446 aa)). Residue cysteine 824 is the For EPSP synthase activity of the active site. Positions 866–1057 (ASIFIIGMRG…RSKENTFFVS (192 aa)) are shikimate kinase. ATP is bound at residue 872–879 (GMRGAGKT). The interval 1058–1278 (LTLPDLAPAA…AAPGQLSARE (221 aa)) is 3-dehydroquinase. Histidine 1181 functions as the Proton acceptor; for 3-dehydroquinate dehydratase activity in the catalytic mechanism. Lysine 1209 functions as the Schiff-base intermediate with substrate; for 3-dehydroquinate dehydratase activity in the catalytic mechanism. Positions 1291-1597 (SKKFAVIGNP…VQPKDDDIST (307 aa)) are shikimate dehydrogenase.

The protein in the N-terminal section; belongs to the sugar phosphate cyclases superfamily. Dehydroquinate synthase family. It in the 2nd section; belongs to the EPSP synthase family. In the 3rd section; belongs to the shikimate kinase family. This sequence in the 4th section; belongs to the type-I 3-dehydroquinase family. The protein in the C-terminal section; belongs to the shikimate dehydrogenase family. As to quaternary structure, homodimer. The cofactor is Zn(2+).

The protein resides in the cytoplasm. It catalyses the reaction 7-phospho-2-dehydro-3-deoxy-D-arabino-heptonate = 3-dehydroquinate + phosphate. The catalysed reaction is 3-dehydroquinate = 3-dehydroshikimate + H2O. It carries out the reaction shikimate + NADP(+) = 3-dehydroshikimate + NADPH + H(+). The enzyme catalyses shikimate + ATP = 3-phosphoshikimate + ADP + H(+). It catalyses the reaction 3-phosphoshikimate + phosphoenolpyruvate = 5-O-(1-carboxyvinyl)-3-phosphoshikimate + phosphate. It functions in the pathway metabolic intermediate biosynthesis; chorismate biosynthesis; chorismate from D-erythrose 4-phosphate and phosphoenolpyruvate: step 2/7. It participates in metabolic intermediate biosynthesis; chorismate biosynthesis; chorismate from D-erythrose 4-phosphate and phosphoenolpyruvate: step 3/7. Its pathway is metabolic intermediate biosynthesis; chorismate biosynthesis; chorismate from D-erythrose 4-phosphate and phosphoenolpyruvate: step 4/7. The protein operates within metabolic intermediate biosynthesis; chorismate biosynthesis; chorismate from D-erythrose 4-phosphate and phosphoenolpyruvate: step 5/7. It functions in the pathway metabolic intermediate biosynthesis; chorismate biosynthesis; chorismate from D-erythrose 4-phosphate and phosphoenolpyruvate: step 6/7. Functionally, the AROM polypeptide catalyzes 5 consecutive enzymatic reactions in prechorismate polyaromatic amino acid biosynthesis. In Ajellomyces dermatitidis (strain ER-3 / ATCC MYA-2586) (Blastomyces dermatitidis), this protein is Pentafunctional AROM polypeptide.